Consider the following 752-residue polypeptide: Reticulon-1-B (752 aa).

Disordered stretches follow at residues 1-57 (MAAN…TSTD), 264-319 (EYPG…SEKQ), 334-424 (KAKE…SPSI), and 444-465 (ESCD…SPMM). The segment covering 264–273 (EYPGNQQGKS) has biased composition (polar residues). Basic and acidic residues predominate over residues 334-361 (KAKEGTKRFSSETNDEKQSRSFHAEKQD). Residues 363–383 (TVMSTEATSASHYTKASSAES) show a composition bias toward polar residues. In terms of domain architecture, Reticulon spans 566–752 (AIDLLYWRDV…AKIPGTKQKE (187 aa)). The next 2 helical transmembrane spans lie at 580–600 (IVFG…VVSV) and 684–704 (VLMW…LLIM).

In terms of tissue distribution, isoform A and isoform C are both expressed in the animal hemisphere (presumptive neural ectoderm) of blastula and gastrula stage embryos, and along the anterior neural border, in the panplacodal primordium, and in the dorsolateral side of archenteron roof of late neurula embryos. At the tailbud stage, expression of the isoforms begin to differ. Isoform A localizes to the cranial placodes including the trigeminal placode, lateral line placode, olfactory placode and otic vesicle. Isoform C localizes to the central nervous system, including the spinal cord, prosencephalon, mesencephalon and rhombencephalon, as well as the lateral line placode, otic vesicle and pronephros.

Its subcellular location is the endoplasmic reticulum membrane. The protein resides in the nucleus. In terms of biological role, inhibits amyloid precursor protein processing, probably by blocking BACE1 activity. The chain is Reticulon-1-B (rtn1-b) from Xenopus laevis (African clawed frog).